The chain runs to 90 residues: UPF0367 protein Npun_R4552 (90 aa).

Belongs to the UPF0367 family.

The chain is UPF0367 protein Npun_R4552 from Nostoc punctiforme (strain ATCC 29133 / PCC 73102).